A 187-amino-acid chain; its full sequence is Elongation factor P (187 aa).

It belongs to the elongation factor P family.

Its subcellular location is the cytoplasm. The protein operates within protein biosynthesis; polypeptide chain elongation. Functionally, involved in peptide bond synthesis. Stimulates efficient translation and peptide-bond synthesis on native or reconstituted 70S ribosomes in vitro. Probably functions indirectly by altering the affinity of the ribosome for aminoacyl-tRNA, thus increasing their reactivity as acceptors for peptidyl transferase. This is Elongation factor P from Mycoplasmopsis agalactiae (strain NCTC 10123 / CIP 59.7 / PG2) (Mycoplasma agalactiae).